Reading from the N-terminus, the 144-residue chain is Probable 4-amino-4-deoxy-L-arabinose-phosphoundecaprenol flippase subunit ArnF (144 aa).

The Cytoplasmic portion of the chain corresponds to 1-6; sequence MTHRRA. A helical membrane pass occupies residues 7-24; the sequence is TLCAMASVALVSAAQLGM. The Periplasmic segment spans residues 25–56; the sequence is RWSMSRLPSPVQWLEMQEHAQLDLSALRVVCA. The chain crosses the membrane as a helical span at residues 57–77; sequence SITAYALSMLFWLLALRVLPL. Topologically, residues 78 to 80 are cytoplasmic; that stretch reads SRA. Residues 81–101 form a helical membrane-spanning segment; sequence YSLLSISYALVYTLAATLPFF. Topologically, residues 102–104 are periplasmic; sequence HET. A helical membrane pass occupies residues 105 to 125; that stretch reads FTVSKTVGVSLIVAGVLTINL. At 126–144 the chain is on the cytoplasmic side; sequence RRLPRPSPQDLSHENQRFR.

It belongs to the ArnF family. In terms of assembly, heterodimer of ArnE and ArnF.

It is found in the cell inner membrane. Its pathway is bacterial outer membrane biogenesis; lipopolysaccharide biosynthesis. Its function is as follows. Translocates 4-amino-4-deoxy-L-arabinose-phosphoundecaprenol (alpha-L-Ara4N-phosphoundecaprenol) from the cytoplasmic to the periplasmic side of the inner membrane. This Pseudomonas syringae pv. syringae (strain B728a) protein is Probable 4-amino-4-deoxy-L-arabinose-phosphoundecaprenol flippase subunit ArnF.